The sequence spans 157 residues: 17.8 kDa class I heat shock protein (157 aa).

The 116-residue stretch at 41 to 156 folds into the sHSP domain; sequence ETSAITNARV…KAQVKSIDIS (116 aa).

The protein belongs to the small heat shock protein (HSP20) family. Homodimer under normal physiological conditions. Aggregates in high oligomeric complexes after heat shock. Binds to AKR2A and to chloroplasts. As to expression, expressed ubiquitously at low levels under normal physiological conditions.

It is found in the cytoplasm. In terms of biological role, cytosolic mediator for sorting and targeting of nascent chloroplast outer envelope membrane (OEM) proteins to the chloroplast. Functions as an AKR2A cofactor to facilitate the targeting of OEP7 to chloroplasts. The polypeptide is 17.8 kDa class I heat shock protein (HSP17.8) (Arabidopsis thaliana (Mouse-ear cress)).